The following is a 46-amino-acid chain: Endochitinase 2 (46 aa).

Belongs to the glycosyl hydrolase 19 family. Chitinase class I subfamily.

It carries out the reaction Random endo-hydrolysis of N-acetyl-beta-D-glucosaminide (1-&gt;4)-beta-linkages in chitin and chitodextrins.. Its function is as follows. Defense against chitin-containing fungal and bacterial pathogens. The chain is Endochitinase 2 from Arachis hypogaea (Peanut).